The following is a 375-amino-acid chain: 4,4'-diaponeurosporenoate glycosyltransferase (375 aa).

4 consecutive transmembrane segments (helical) span residues 3 to 23 (WLSR…ALIF), 164 to 184 (FYEG…NVFS), 277 to 297 (IMAA…GLCL), and 330 to 350 (FSNL…KIFI).

It belongs to the glycosyltransferase 2 family. CrtQ subfamily.

The protein localises to the cell membrane. The protein operates within carotenoid biosynthesis; staphyloxanthin biosynthesis; staphyloxanthin from farnesyl diphosphate: step 4/5. Catalyzes the glycosylation of 4,4'-diaponeurosporenoate, i.e. the esterification of glucose at the C1'' position with the carboxyl group of 4,4'-diaponeurosporenic acid, to form glycosyl-4,4'-diaponeurosporenoate. This is a step in the biosynthesis of staphyloxanthin, an orange pigment present in most staphylococci strains. The sequence is that of 4,4'-diaponeurosporenoate glycosyltransferase (crtQ) from Staphylococcus aureus (strain MRSA252).